We begin with the raw amino-acid sequence, 70 residues long: Conotoxin Lt3.4 (70 aa).

The first 24 residues, 1–24, serve as a signal peptide directing secretion; it reads MLKMGVLLFTFLVLFPLAMFQLDA. The propeptide occupies 25–54; sequence DQPVERYAENKQDLNRDERMKIMLSALRQR. A Pyrrolidone carboxylic acid modification is found at glutamine 55. 3 disulfide bridges follow: cysteine 56/cysteine 68, cysteine 57/cysteine 66, and cysteine 62/cysteine 69.

This sequence belongs to the conotoxin M superfamily. In terms of tissue distribution, expressed by the venom duct.

The protein resides in the secreted. The protein is Conotoxin Lt3.4 of Conus litteratus (Lettered cone).